Reading from the N-terminus, the 170-residue chain is Interferon gamma (170 aa).

Residues 1–20 form the signal peptide; the sequence is MNSRLCIMALLLCFSQALLG. Asparagine 36 and asparagine 103 each carry an N-linked (GlcNAc...) asparagine glycan.

It belongs to the type II (or gamma) interferon family. Homodimer. Interacts with IFNGR1 (via extracellular domain); this interaction promotes IFNGR1 dimerization. As to expression, released primarily from activated T lymphocytes.

The protein resides in the secreted. Functionally, type II interferon produced by immune cells such as T-cells and NK cells that plays crucial roles in antimicrobial, antiviral, and antitumor responses by activating effector immune cells and enhancing antigen presentation. Primarily signals through the JAK-STAT pathway after interaction with its receptor IFNGR1 to affect gene regulation. Upon IFNG binding, IFNGR1 intracellular domain opens out to allow association of downstream signaling components JAK2, JAK1 and STAT1, leading to STAT1 activation, nuclear translocation and transcription of IFNG-regulated genes. Many of the induced genes are transcription factors such as IRF1 that are able to further drive regulation of a next wave of transcription. Plays a role in class I antigen presentation pathway by inducing a replacement of catalytic proteasome subunits with immunoproteasome subunits. In turn, increases the quantity, quality, and repertoire of peptides for class I MHC loading. Increases the efficiency of peptide generation also by inducing the expression of activator PA28 that associates with the proteasome and alters its proteolytic cleavage preference. Up-regulates as well MHC II complexes on the cell surface by promoting expression of several key molecules such as cathepsins B/CTSB, H/CTSH, and L/CTSL. Participates in the regulation of hematopoietic stem cells during development and under homeostatic conditions by affecting their development, quiescence, and differentiation. In Sigmodon hispidus (Hispid cotton rat), this protein is Interferon gamma (IFNG).